Here is a 332-residue protein sequence, read N- to C-terminus: uncharacterized protein (332 aa).

A signal peptide spans 1–23 (MKRIPSLIIGLLLILATWHSVLA). A helical transmembrane segment spans residues 231 to 251 (SFFLGMIVTLIILAPVILYLW).

The protein resides in the membrane. This is an uncharacterized protein from Pyrococcus horikoshii (strain ATCC 700860 / DSM 12428 / JCM 9974 / NBRC 100139 / OT-3).